We begin with the raw amino-acid sequence, 698 residues long: MLIIQIPDGMPDEDACTLGVGITTVGQGLYQSLGLPLPGSRARANFPILIYGGSTATGSLAIQYARLSGCSQIITTCSPRHFDWAKSLGADASFDYRDPDCVQKIKDCTQNTLAHVLDCVSTSASAELCAAAIGSNGGTVSYLLPLKHQREDVEAKYTLAYTAFGEYFSIAGTRKFEARPEDLEFAKMFWKLSEGLVAEGKIRVHPPRVGKDGLKGVLDGFQAMREGQNWIPNMYGYEVGDECRSLHVWADRRSLEIPRAPIDQNATSNLDVAIVGGGIAGVTLALGLLKRGIKPIIYERGRSFREIGAGIGFTPNAEWAMKVLDPEIHAAFKRVTVQNGTDWFIWMDGSLEKEAVVHKMYLGERGFEGCARADFLDELVKSLPQGTVRFSKNLVDIVDEDGASEVRLKFSDGSTASAHIVIGCDGIRSKVRQFVIGGDDQPAHHPHYTHKYAFRGLVPMDKAYAALGQEKTDTRHMYLGPDAHALTFPVAGGKLLNVVAFVTDPSSWPDGEKFTLPASKTDAVKAFERFNSTVRAIIDMLPEELSRWAVFDTYDYPAPTFVRGRVCISGDAAHAAAPYHGAGAGFAVEDAAVLAELLSDAYDYLKISDVEKADIPKSVVLRKALETYNSIRLERAHWLVETSRHIGEIYEGQNADIGLDHTKCAAEIDWRCRKIWDYDVDDMMKQTSTLFKKQLGMI.

Residues 54–57 (STAT), 78–81 (SPRH), Y96, and 279–280 (IA) contribute to the NADP(+) site. Positions 299, 312, and 372 each coordinate FAD. R455 is a catalytic residue. 2 residues coordinate FAD: D571 and A584.

This sequence in the N-terminal section; belongs to the zinc-containing alcohol dehydrogenase family. In the C-terminal section; belongs to the paxM FAD-dependent monooxygenase family.

Its pathway is secondary metabolite biosynthesis. Functionally, dual trans-enoyl reductase/FAD-dependent monooxygenase; part of the gene cluster that mediates the biosynthesis of azaterrilone A and other azaphilones, a class of fungal metabolites characterized by a highly oxygenated pyrano-quinone bicyclic core and exhibiting a broad range of bioactivities. The first step of the pathway begins with the non-reducing polyketide synthase tazA that assembles one acetyl-CoA starter unit, five malonyl-CoA units, and catalyzes a series of Claisen condensations, methylation, PT-mediated cyclization, and finally releases the first hexaketide precursor through the R-domain. The tazA product then undergoes reduction on its terminal ketone and the following pyran-ring formation by yet undetermined enzyme(s). Dehydration and enoyl reduction, possibly involving the trans-enoyl reductase tazE leads to the next intermediate. TazD is predicted as an acetyltransferase and might catalyze the acetylation steps leading to the synthesis of azaterrilone A. Azaterrilone A is not the final product of the taz pathway and both the highly reducing polyketide synthase tazB and the dual enzyme tazHJ catalyze late steps of the pathway, leading to the production of the 2 final stereoisomers that contain additional polyketide modification whose structures have still to be determined. This Aspergillus terreus (strain NIH 2624 / FGSC A1156) protein is Dual trans-enoyl reductase/FAD-dependent monooxygenase tazHJ.